A 284-amino-acid polypeptide reads, in one-letter code: NAD/NADP-dependent indole-3-acetaldehyde reductase (284 aa).

Asp49 contributes to the NADPH binding site. Residues Tyr54 and His109 each act as proton donor in the active site. NADPH contacts are provided by Ser143, Gln165, Leu196, Arg201, Thr239, Thr240, Thr241, Ser242, Lys243, and Arg246.

This sequence belongs to the aldo/keto reductase family. In terms of assembly, monomer.

Its subcellular location is the cytoplasm. The protein localises to the nucleus. It catalyses the reaction indole-3-ethanol + NAD(+) = indole-3-acetaldehyde + NADH + H(+). It carries out the reaction indole-3-ethanol + NADP(+) = indole-3-acetaldehyde + NADPH + H(+). The chain is NAD/NADP-dependent indole-3-acetaldehyde reductase from Schizosaccharomyces pombe (strain 972 / ATCC 24843) (Fission yeast).